A 411-amino-acid chain; its full sequence is MNFEHISREDNEIYALIEKELERQQNGIELIASENVASEAVMEAMGSYLTNKYAEGYPGKRYYGGCYVVDGVEEIARERAKELFGAEHANVQPHSGSQANMAVYFTILEHGDTVLGMDLSHGGHLTHGSPVNFSGKLFNFVSYGVDKETEEINYDVVRELAIKHKPKLIVAGASAYSRIIDFKKFREICDEIGAYLMVDMAHIAGLVAAGLHPSPVPYADFVTSTTHKTLRGPRGGLILCKEKYAKDLDKNIFPGMQGGPLMHIIAAKAVCFKEALDPSFKEYMARVVENCKELGEQLVKRGFKLVSNGTDNHLILVDLNNKDITGKDAEKLLDEVGITLNKNTVPNETRSPFVTSGVRIGTAAITTRGFERKDMEEIADIINETIINRDKDLEKYKQRVKALCEKYPLYK.

Residues Leu-119 and 123–125 contribute to the (6S)-5,6,7,8-tetrahydrofolate site; that span reads GHL. Lys-228 is subject to N6-(pyridoxal phosphate)lysine. Position 351–353 (351–353) interacts with (6S)-5,6,7,8-tetrahydrofolate; sequence SPF.

It belongs to the SHMT family. As to quaternary structure, homodimer. Pyridoxal 5'-phosphate is required as a cofactor.

The protein resides in the cytoplasm. The catalysed reaction is (6R)-5,10-methylene-5,6,7,8-tetrahydrofolate + glycine + H2O = (6S)-5,6,7,8-tetrahydrofolate + L-serine. It functions in the pathway one-carbon metabolism; tetrahydrofolate interconversion. It participates in amino-acid biosynthesis; glycine biosynthesis; glycine from L-serine: step 1/1. In terms of biological role, catalyzes the reversible interconversion of serine and glycine with tetrahydrofolate (THF) serving as the one-carbon carrier. This reaction serves as the major source of one-carbon groups required for the biosynthesis of purines, thymidylate, methionine, and other important biomolecules. Also exhibits THF-independent aldolase activity toward beta-hydroxyamino acids, producing glycine and aldehydes, via a retro-aldol mechanism. The protein is Serine hydroxymethyltransferase of Clostridium botulinum (strain Alaska E43 / Type E3).